The following is a 118-amino-acid chain: UPF0344 protein RBAM_010920 (118 aa).

Transmembrane regions (helical) follow at residues 4–24, 33–53, 62–82, and 93–113; these read WHITSWVVALILVFVSYGLYG, ITHMILRLFYIIIILTGAELF, EYAGKMLLGIITIGLMEMLVI, and LWIGFIIVLVLTVLLGLHLPI.

Belongs to the UPF0344 family.

Its subcellular location is the cell membrane. This Bacillus velezensis (strain DSM 23117 / BGSC 10A6 / LMG 26770 / FZB42) (Bacillus amyloliquefaciens subsp. plantarum) protein is UPF0344 protein RBAM_010920.